Here is a 341-residue protein sequence, read N- to C-terminus: Solute carrier family 25 member 43 (341 aa).

Solcar repeat units follow at residues 11–101, 105–185, and 200–298; these read TGGQ…TDDL, SQWS…LLVY, and SLPQ…LYQN. 6 consecutive transmembrane segments (helical) span residues 16-36, 68-88, 110-130, 166-186, 205-225, and 262-282; these read LLCAGLAGTLSLSLTAPLELA, LWKGNAVACLRLFPCSAVQLA, IMAGSLAGMVSTIVTYPTDLI, GVSLTVVGALPFSAGSLLVYM, FANVCLAAAVTQTLSFPFETV, and VLGLWNGLTANLLKIVPYFGI.

This sequence belongs to the mitochondrial carrier (TC 2.A.29) family.

It localises to the mitochondrion inner membrane. In Homo sapiens (Human), this protein is Solute carrier family 25 member 43 (SLC25A43).